The sequence spans 272 residues: Undecaprenyl-diphosphatase (272 aa).

Transmembrane regions (helical) follow at residues 2–22 (FDII…FLPI), 43–63 (FISM…VLLY), 82–102 (WQLW…GLPL), 110–130 (LHTP…FIIL), 185–205 (YVAT…VLII), 224–244 (VLMT…KWLL), and 252–272 (FKPF…VMFI).

This sequence belongs to the UppP family.

The protein localises to the cell membrane. The enzyme catalyses di-trans,octa-cis-undecaprenyl diphosphate + H2O = di-trans,octa-cis-undecaprenyl phosphate + phosphate + H(+). Catalyzes the dephosphorylation of undecaprenyl diphosphate (UPP). Confers resistance to bacitracin. This is Undecaprenyl-diphosphatase from Lacticaseibacillus casei (strain BL23) (Lactobacillus casei).